Here is a 210-residue protein sequence, read N- to C-terminus: Ribosomal RNA small subunit methyltransferase G (210 aa).

S-adenosyl-L-methionine is bound by residues G76, L81, 127–128 (VE), and R142.

Belongs to the methyltransferase superfamily. RNA methyltransferase RsmG family.

Its subcellular location is the cytoplasm. It carries out the reaction guanosine(527) in 16S rRNA + S-adenosyl-L-methionine = N(7)-methylguanosine(527) in 16S rRNA + S-adenosyl-L-homocysteine. Specifically methylates the N7 position of guanine in position 527 of 16S rRNA. In Aliivibrio fischeri (strain ATCC 700601 / ES114) (Vibrio fischeri), this protein is Ribosomal RNA small subunit methyltransferase G.